The following is a 402-amino-acid chain: MKKIVAIFLVFLGSLWAEDPVIDVVNSGVVLPKIIVKDNSNLSDENLKKSFYNIIVNDLKVSSNFEVVANATETSNYTFEYTLNKNGNTLSLNVKIKAGGSDKSEQTYTLNGLEQYPFLAHKSVKASVNALGLAPVDWMDHKILIARNSSSKKSQIIMADYTLTYQKVIVDGGLNLFPKWGNKEQTLFYYTAYDHDKPTLYRYDLNTNKASKILSSGGMVVASDVSVDGSKLLVTMAPKDQPDVYLYDLNTKNLTQLTNYSGIDVNGNFIGSDDSKVVFVSDRLGYPNIFMQDLNSNSAEQVVFHGRNNSAVSTYKDFLVYSSREPNQAGVFNIYLMSINSDYIRQLTANGKNLFPRFSSDGGSIVFIKYLGAQSALGVIRVNANKTFYFPLRVGKIQSIDW.

The N-terminal stretch at 1-17 is a signal peptide; it reads MKKIVAIFLVFLGSLWA.

It belongs to the TolB family. In terms of assembly, the Tol-Pal system is composed of five core proteins: the inner membrane proteins TolA, TolQ and TolR, the periplasmic protein TolB and the outer membrane protein Pal. They form a network linking the inner and outer membranes and the peptidoglycan layer.

Its subcellular location is the periplasm. Functionally, part of the Tol-Pal system, which plays a role in outer membrane invagination during cell division and is important for maintaining outer membrane integrity. The chain is Tol-Pal system protein TolB from Campylobacter jejuni (strain RM1221).